The following is a 336-amino-acid chain: Glutamyl endopeptidase (336 aa).

An N-terminal signal peptide occupies residues 1 to 29 (MKGKFLKVSSLFVATLTTATLVSSPAANA). The propeptide occupies 30–68 (LSSKAMDNHPQQTQSSKQQTPKIQKGGNLKPLEQREHAN). Positions 34-61 (AMDNHPQQTQSSKQQTPKIQKGGNLKPL) are disordered. Over residues 39–51 (PQQTQSSKQQTPK) the composition is skewed to low complexity. Catalysis depends on charge relay system residues H119, D161, and S237. Positions 283 to 336 (FANDDQPNNPDNPDNPNNPDNPNNPDEPNNPDNPNNPDNPDNGDTNNSDNPDAA) are disordered. Residues 286–336 (DDQPNNPDNPDNPNNPDNPNNPDEPNNPDNPNNPDNPDNGDTNNSDNPDAA) show a composition bias toward low complexity. A run of 11 repeats spans residues 289-291 (PNN), 292-294 (PDN), 295-297 (PDN), 298-300 (PNN), 301-303 (PDN), 304-306 (PNN), 310-312 (PNN), 313-315 (PDN), 316-318 (PNN), 319-321 (PDN), and 322-324 (PDN). The segment at 289–324 (PNNPDNPDNPNNPDNPNNPDEPNNPDNPNNPDNPDN) is 11 X 3 AA repeats of P-[DN]-N.

This sequence belongs to the peptidase S1B family. Proteolytically cleaved by aureolysin (aur). This cleavage leads to the activation of SspA.

It localises to the secreted. It catalyses the reaction Preferential cleavage: Glu-|-Xaa, Asp-|-Xaa.. Preferentially cleaves peptide bonds on the carboxyl-terminal side of aspartate and glutamate. Along with other extracellular proteases it is involved in colonization and infection of human tissues. Required for proteolytic maturation of thiol protease SspB and inactivation of SspC, an inhibitor of SspB. It is the most important protease for degradation of fibronectin-binding protein (FnBP) and surface protein A, which are involved in adherence to host cells. May also protect bacteria against host defense mechanism by cleaving the immunoglobulin classes IgG, IgA and IgM. May be involved in the stability of secreted lipases. The chain is Glutamyl endopeptidase (sspA) from Staphylococcus aureus (strain COL).